Consider the following 738-residue polypeptide: 1,4-alpha-glucan branching enzyme GlgB (738 aa).

Asp417 functions as the Nucleophile in the catalytic mechanism. The active-site Proton donor is the Glu472.

Belongs to the glycosyl hydrolase 13 family. GlgB subfamily. In terms of assembly, monomer.

It carries out the reaction Transfers a segment of a (1-&gt;4)-alpha-D-glucan chain to a primary hydroxy group in a similar glucan chain.. Its pathway is glycan biosynthesis; glycogen biosynthesis. Its function is as follows. Catalyzes the formation of the alpha-1,6-glucosidic linkages in glycogen by scission of a 1,4-alpha-linked oligosaccharide from growing alpha-1,4-glucan chains and the subsequent attachment of the oligosaccharide to the alpha-1,6 position. This chain is 1,4-alpha-glucan branching enzyme GlgB, found in Burkholderia pseudomallei (strain 1106a).